A 495-amino-acid polypeptide reads, in one-letter code: Internal alternative NAD(P)H-ubiquinone oxidoreductase A1, mitochondrial (495 aa).

A mitochondrion-targeting transit peptide spans 1–41 (MPWFKNLIKISKTITNQSSSYKSITPLASPLLTQFLQFTKQ). 61 to 91 (RIVVLGSGWAGCRLMKDIDTNIYDVVCVSPR) serves as a coordination point for FAD. 228 to 264 (LHCVVVGGGPTGVEFSGELSDFILKDVHQRYAHVKDY) serves as a coordination point for NAD(+). A Microbody targeting signal motif is present at residues 486-495 (LVFGRDISRI).

This sequence belongs to the NADH dehydrogenase family. Requires FAD as cofactor.

The protein resides in the mitochondrion inner membrane. It is found in the peroxisome. The catalysed reaction is a quinone + NADH + H(+) = a quinol + NAD(+). The enzyme catalyses a ubiquinone + NADH + H(+) = a ubiquinol + NAD(+). In terms of biological role, alternative NADH-ubiquinone oxidoreductase which catalyzes the oxidation of mitochondrial NADH does not translocate protons across the inner mitochondrial membrane. In Solanum tuberosum (Potato), this protein is Internal alternative NAD(P)H-ubiquinone oxidoreductase A1, mitochondrial (NDA1).